We begin with the raw amino-acid sequence, 319 residues long: Replication factor C small subunit 2 (319 aa).

Position 44 to 51 (44 to 51 (GPPGTGKT)) interacts with ATP.

It belongs to the activator 1 small subunits family. RfcS subfamily. As to quaternary structure, heteromultimer composed of small subunits (RfcS) and large subunits (RfcL).

Part of the RFC clamp loader complex which loads the PCNA sliding clamp onto DNA. This is Replication factor C small subunit 2 from Pyrobaculum aerophilum (strain ATCC 51768 / DSM 7523 / JCM 9630 / CIP 104966 / NBRC 100827 / IM2).